A 524-amino-acid polypeptide reads, in one-letter code: Vang-like protein 1 (524 aa).

Positions 1–15 (MDTESTYSGYSYYSS) are enriched in low complexity. Residues 1–85 (MDTESTYSGY…TTAITGTSEH (85 aa)) form a disordered region. Over 1-117 (MDTESTYSGY…KRYLGLTVAS (117 aa)) the chain is Cytoplasmic. Residues 73 to 85 (GETTTAITGTSEH) show a composition bias toward polar residues. A phosphoserine mark is found at Ser86 and Ser88. Residues 118–138 (FLGLLVFLTPIAFILLPPILW) traverse the membrane as a helical segment. Over 139–151 (RDELEPCGTICEG) the chain is Extracellular. The helical transmembrane segment at 152–172 (LFISMAFKLLILLIGTWALFF) threads the bilayer. Topologically, residues 173–182 (RKRRADMPRV) are cytoplasmic. A helical transmembrane segment spans residues 183-203 (FVFRALLLVLIFLFVVSYWLF). Residues 204 to 222 (YGVRILDSRDRNYQGIVQY) lie on the Extracellular side of the membrane. A helical membrane pass occupies residues 223-243 (AVSLVDALLFIHYLAIVLLEL). Over 244-524 (RQLQPMFTLQ…VLRLQSETSV (281 aa)) the chain is Cytoplasmic.

It belongs to the Vang family. In terms of assembly, heterodimer with VANGL2. Interacts through its C-terminal region with the N-terminal half of DVL1, DVL2 and DVL3. The PDZ domain of DVL1, DVL2 and DVL3 is required for the interaction. According to PubMed:11956595, ubiquitously expressed. According to PubMed:12011995, expressed specifically in testis and ovary.

It localises to the cell membrane. In Homo sapiens (Human), this protein is Vang-like protein 1 (VANGL1).